The primary structure comprises 416 residues: Enterobactin exporter EntS (416 aa).

At 1–21 the chain is on the cytoplasmic side; it reads MNKQSWLLNLSLLKTHPAFRA. The helical transmembrane segment at 22-42 threads the bilayer; the sequence is VFLARFISIVSLGLLGVAVPV. Residues 43-55 are Periplasmic-facing; that stretch reads QIQIMTHSTWQVG. Residues 56–76 traverse the membrane as a helical segment; sequence LSVTLTGGAMFVGLMVGGVLA. Over 77–83 the chain is Cytoplasmic; that stretch reads DRYERKK. The helical transmembrane segment at 84-104 threads the bilayer; the sequence is VILLARGTCGIGFIGLCLNAL. Residues 105 to 109 lie on the Periplasmic side of the membrane; it reads LPEPS. Residues 110–130 form a helical membrane-spanning segment; sequence LLAIYLLGLWDGFFASLGVTA. The Cytoplasmic portion of the chain corresponds to 131 to 156; that stretch reads LLAATPALVGRENLMQAGAITMLTVR. The chain crosses the membrane as a helical span at residues 157–177; it reads LGSVISPMIGGLLLATGGVAW. Position 178 (Asn178) is a topological domain, periplasmic. Residues 179–199 traverse the membrane as a helical segment; sequence YGLAAAGTFITLLPLLSLPAL. Topologically, residues 200–218 are cytoplasmic; it reads PPPPQPREHPLKSLLAGFR. A helical membrane pass occupies residues 219 to 239; sequence FLLASPLVGGIALLGGLLTMA. The Periplasmic segment spans residues 240–256; it reads SAVRVLYPALADNWQMS. Residues 257 to 277 form a helical membrane-spanning segment; sequence AAQIGFLYAAIPLGAAIGALT. At 278–287 the chain is on the cytoplasmic side; it reads SGKLAHSVRP. The chain crosses the membrane as a helical span at residues 288 to 307; it reads GLLMLLSTLGAFLAIGLFGL. The Periplasmic portion of the chain corresponds to 308–313; the sequence is MPMWIL. Residues 314–336 form a helical membrane-spanning segment; sequence GVVCLALFGWLSAVSSLLQYTML. At 337-356 the chain is on the cytoplasmic side; that stretch reads QTQTPEAMLGRINGLWTAQN. Residues 357–377 traverse the membrane as a helical segment; sequence VTGDAIGAALLGGLGAMMTPV. Ala378 is a topological domain (periplasmic). A helical transmembrane segment spans residues 379-399; the sequence is SASASGFGLLIIGVLLLLVLV. The Cytoplasmic segment spans residues 400–416; that stretch reads ELRRFRQTPPQVTASDS.

Belongs to the major facilitator superfamily. EntS (TC 2.A.1.38) family.

The protein localises to the cell inner membrane. Component of an export pathway for enterobactin. The chain is Enterobactin exporter EntS from Escherichia coli O127:H6 (strain E2348/69 / EPEC).